Reading from the N-terminus, the 802-residue chain is Phenylalanine--tRNA ligase beta subunit (802 aa).

The 111-residue stretch at 38 to 148 folds into the tRNA-binding domain; it reads SKNFERVIVG…SEVPVGTDIS (111 aa). A B5 domain is found at 403–478; the sequence is VIQKKIFVLK…RVFGYHNIPA (76 aa). Residues D456, D462, and D466 each contribute to the Mg(2+) site. Residues 703–796 enclose the FDX-ACB domain; sequence SLYPRCSRDI…LQEKFNAILR (94 aa).

It belongs to the phenylalanyl-tRNA synthetase beta subunit family. Type 1 subfamily. Tetramer of two alpha and two beta subunits. Mg(2+) is required as a cofactor.

It is found in the cytoplasm. The catalysed reaction is tRNA(Phe) + L-phenylalanine + ATP = L-phenylalanyl-tRNA(Phe) + AMP + diphosphate + H(+). The chain is Phenylalanine--tRNA ligase beta subunit from Buchnera aphidicola subsp. Baizongia pistaciae (strain Bp).